A 2180-amino-acid chain; its full sequence is Genome polyprotein (2180 aa).

4 disordered regions span residues 507 to 529 (DGAD…AKDP), 624 to 679 (QPQK…YPIQ), 703 to 809 (KRAK…NTLP), and 822 to 848 (SEVE…PPKM). Positions 573-624 (SKNQGLIRVLEQQLQDLNKRICPPGTSLFHFFDQQKSEMASLKEQIRLLKEQ) form a coiled coil. Polar residues-rich tracts occupy residues 631-643 (DTPS…QPFH) and 670-679 (PSLFSQYPIQ). Positions 703–716 (KRAKKKLQKDEVKQ) are enriched in basic and acidic residues. Polar residues predominate over residues 759–771 (SEDTSSQSYISTE). A compositionally biased stretch (low complexity) spans 784–807 (SEESTQLSQLSSSSNDSPENNENT). The span at 822–832 (SEVEDEVDGMT) shows a compositional bias: acidic residues. The CCHC-type zinc-finger motif lies at 1113 to 1126 (CFTCGKIGHFSRNC). Asp-1227 serves as the catalytic For protease activity; shared with dimeric partner. Residues Asp-1480, Asp-1543, and Asp-1544 each contribute to the Mg(2+) site. 3 disordered regions span residues 1824 to 1848 (RRTR…YKLS), 2115 to 2145 (NIVK…KNKC), and 2161 to 2180 (YSTK…EPCI). The span at 1828–1847 (SNSTKSKADSSQSTGSSYKL) shows a compositional bias: polar residues. The segment covering 2120 to 2145 (SPRKRKGKAKSKSSTRNEKRRAKNKC) has biased composition (basic residues). Positions 2163–2180 (TKPSTPSWTQDSSSEPCI) are enriched in polar residues.

The protein belongs to the Petuviruses genome polyprotein family.

It catalyses the reaction DNA(n) + a 2'-deoxyribonucleoside 5'-triphosphate = DNA(n+1) + diphosphate. Functionally, encodes presumably for at least four polypeptides: Movement protein (MP), capsid protein (CP), Protease (PR), and reverse transcriptase (RT). In Petunia (PVCV), this protein is Genome polyprotein.